A 197-amino-acid chain; its full sequence is dTTP/UTP pyrophosphatase (197 aa).

Asp-70 serves as the catalytic Proton acceptor.

This sequence belongs to the Maf family. YhdE subfamily. Requires a divalent metal cation as cofactor.

It localises to the cytoplasm. The catalysed reaction is dTTP + H2O = dTMP + diphosphate + H(+). It carries out the reaction UTP + H2O = UMP + diphosphate + H(+). Functionally, nucleoside triphosphate pyrophosphatase that hydrolyzes dTTP and UTP. May have a dual role in cell division arrest and in preventing the incorporation of modified nucleotides into cellular nucleic acids. This chain is dTTP/UTP pyrophosphatase, found in Pectobacterium atrosepticum (strain SCRI 1043 / ATCC BAA-672) (Erwinia carotovora subsp. atroseptica).